The following is a 314-amino-acid chain: Olfactory receptor 2W3 (314 aa).

Topologically, residues 1–25 are extracellular; sequence MDGTNGSTQTHFILLGFSDRPHLER. Asparagine 5 is a glycosylation site (N-linked (GlcNAc...) asparagine). The chain crosses the membrane as a helical span at residues 26 to 49; the sequence is ILFVVILIAYLLTLVGNTTIILVS. At 50-57 the chain is on the cytoplasmic side; that stretch reads RLDPHLHT. The helical transmembrane segment at 58–79 threads the bilayer; sequence PMYFFLAHLSFLDLSFTTSSIP. Over 80 to 100 the chain is Extracellular; sequence QLLYNLNGCDKTISYMGCAIQ. A helical membrane pass occupies residues 101 to 120; it reads LFLFLGLGGVECLLLAVMAY. Over 121–139 the chain is Cytoplasmic; it reads DRCVAICKPLHYMVIMNPR. The chain crosses the membrane as a helical span at residues 140–158; the sequence is LCRGLVSVTWGCGVANSLA. Residues 159 to 195 lie on the Extracellular side of the membrane; the sequence is MSPVTLRLPRCGHHEVDHFLREMPALIRMACVSTVAI. Residues 196–219 traverse the membrane as a helical segment; that stretch reads EGTVFVLAVGVVLSPLVFILLSYS. Over 220–236 the chain is Cytoplasmic; it reads YIVRAVLQIRSASGRQK. A helical transmembrane segment spans residues 237–259; the sequence is AFGTCGSHLTVVSLFYGNIIYMY. The Extracellular segment spans residues 260–272; it reads MQPGASSSQDQGM. A helical transmembrane segment spans residues 273 to 292; it reads FLMLFYNIVTPLLNPLIYTL. Topologically, residues 293-314 are cytoplasmic; the sequence is RNREVKGALGRLLLGKRELGKE.

Belongs to the G-protein coupled receptor 1 family.

Its subcellular location is the cell membrane. Odorant receptor. In Homo sapiens (Human), this protein is Olfactory receptor 2W3 (OR2W3).